Reading from the N-terminus, the 713-residue chain is Leucine-rich repeat neuronal protein 2 (713 aa).

Positions 1–18 are cleaved as a signal peptide; the sequence is MRLLVAPLLLAWVAGATA. Residues 19–630 lie on the Extracellular side of the membrane; sequence AVPVVPWHVP…CHRALGDRPG (612 aa). One can recognise an LRRNT domain in the interval 20-69; that stretch reads VPVVPWHVPCPPQCACQIRPWYTPRSSYREATTVDCNDLFLTAVPPALPA. LRR repeat units follow at residues 70-91, 94-115, 118-139, 142-163, 166-187, 190-211, 214-235, 238-259, 262-283, 286-305, 311-333, and 336-357; these read GTQT…ELGY, NLTE…DFHA, QLLS…SFAG, SLQE…AFSG, NLLR…WFEM, NLEI…NFRP, NLRS…ALEG, SLES…ALEQ, GLKF…DFAN, HLKE…DKFA, ELTK…AFHH, and QMET…TVES. Asn-94 carries N-linked (GlcNAc...) asparagine glycosylation. In terms of domain architecture, LRRCT spans 369-422; it reads NPIRCDCVIRWANATGTRVRFIEPQSTLCAEPPDLQRLPVREVPFREMTDHCLP. Asn-381 carries N-linked (GlcNAc...) asparagine glycosylation. In terms of domain architecture, Ig-like C2-type spans 422–511; the sequence is PLISPRSFPP…LVGADTKTVS (90 aa). A disulfide bond links Cys-445 and Cys-497. N-linked (GlcNAc...) asparagine glycosylation is found at Asn-555 and Asn-583. Residues 631 to 651 traverse the membrane as a helical segment; it reads LIAILALAVLLLAAGLAAHLG. Residues 652-713 are Cytoplasmic-facing; that stretch reads TGQPRKGVGG…TLLPPLSQNS (62 aa).

As to expression, overamplified in malignant gliomas.

It is found in the membrane. The protein is Leucine-rich repeat neuronal protein 2 (LRRN2) of Homo sapiens (Human).